A 324-amino-acid polypeptide reads, in one-letter code: UPF0158 protein CPn_0518/CP_0235/CPj0518/CpB0539 (324 aa).

This sequence belongs to the UPF0158 family.

The protein is UPF0158 protein CPn_0518/CP_0235/CPj0518/CpB0539 of Chlamydia pneumoniae (Chlamydophila pneumoniae).